The primary structure comprises 589 residues: Probable methyltransferase PMT23 (589 aa).

Over 1–4 (MAIS) the chain is Cytoplasmic. Residues 5–25 (VQHVVVLLLSTLLIAITFFLF) form a helical; Signal-anchor for type II membrane protein membrane-spanning segment. At 26 to 589 (TSDNARFPFP…FWRPAKPELR (564 aa)) the chain is on the lumenal side. N-linked (GlcNAc...) asparagine glycans are attached at residues Asn70, Asn375, and Asn442.

This sequence belongs to the methyltransferase superfamily.

The protein localises to the golgi apparatus membrane. The protein is Probable methyltransferase PMT23 of Arabidopsis thaliana (Mouse-ear cress).